The following is a 211-amino-acid chain: Protein-L-isoaspartate O-methyltransferase (211 aa).

The active site involves S62.

It belongs to the methyltransferase superfamily. L-isoaspartyl/D-aspartyl protein methyltransferase family.

The protein localises to the cytoplasm. The catalysed reaction is [protein]-L-isoaspartate + S-adenosyl-L-methionine = [protein]-L-isoaspartate alpha-methyl ester + S-adenosyl-L-homocysteine. Functionally, catalyzes the methyl esterification of L-isoaspartyl residues in peptides and proteins that result from spontaneous decomposition of normal L-aspartyl and L-asparaginyl residues. It plays a role in the repair and/or degradation of damaged proteins. This Shewanella piezotolerans (strain WP3 / JCM 13877) protein is Protein-L-isoaspartate O-methyltransferase.